A 346-amino-acid chain; its full sequence is MQSITIRRPDDWHLHLRDGAMLEGVIADTSRTFARAIIMPNLVPPVVTTSDATAYRERILKALPAGHRFQPLMTLYLTEHTSPDDVEAGARSGLITAVKLYPAGATTNSHGGVRDMEKAMPVLERMAAIGLPLCVHGEVTTPEVDIFDREAVFIDTVLDPLRRRLPELKVTMEHVTTSDGIDYIKAAKANLAGSITSHHLIINRNAILVGGIRPHYYCLPVAKRENHRLALRAAAVSGDARFFLGTDSAPHVDPLKECACGCAGIYTSINTMSCLAHVFEEEDALDRLEAFTSLNGPAWYGLQPNEERITLSRQAEPVVFPAKIETGAGSVTVFDPMYPLHWHVVA.

His-13 and His-15 together coordinate Zn(2+). Residues 15–17 (HLR) and Asn-41 contribute to the substrate site. Zn(2+) contacts are provided by Lys-99, His-136, and His-174. Position 99 is an N6-carboxylysine (Lys-99). His-136 contacts substrate. Leu-219 is a substrate binding site. Zn(2+) is bound at residue Asp-247. Asp-247 is a catalytic residue. The substrate site is built by His-251 and Ala-263.

The protein belongs to the metallo-dependent hydrolases superfamily. DHOase family. Class II DHOase subfamily. As to quaternary structure, homodimer. Zn(2+) serves as cofactor.

It catalyses the reaction (S)-dihydroorotate + H2O = N-carbamoyl-L-aspartate + H(+). It functions in the pathway pyrimidine metabolism; UMP biosynthesis via de novo pathway; (S)-dihydroorotate from bicarbonate: step 3/3. Functionally, catalyzes the reversible cyclization of carbamoyl aspartate to dihydroorotate. In Rhizobium leguminosarum bv. trifolii (strain WSM2304), this protein is Dihydroorotase.